Consider the following 109-residue polypeptide: uncharacterized protein (109 aa).

2 helical membrane passes run 19–39 and 53–73; these read LELV…CLIP and YFID…FYPF.

It is found in the membrane. This is an uncharacterized protein from Saccharomyces cerevisiae (strain ATCC 204508 / S288c) (Baker's yeast).